Consider the following 412-residue polypeptide: Tryptophan 2,3-dioxygenase (412 aa).

Substrate is bound by residues 79–83, Tyr-146, and Arg-150; that span reads FIVVH. His-346 lines the heme pocket. Thr-360 serves as a coordination point for substrate.

It belongs to the tryptophan 2,3-dioxygenase family. As to quaternary structure, homotetramer. The cofactor is heme.

The catalysed reaction is L-tryptophan + O2 = N-formyl-L-kynurenine. It functions in the pathway amino-acid degradation; L-tryptophan degradation via kynurenine pathway; L-kynurenine from L-tryptophan: step 1/2. Its function is as follows. Heme-dependent dioxygenase that catalyzes the oxidative cleavage of the L-tryptophan (L-Trp) pyrrole ring and converts L-tryptophan to N-formyl-L-kynurenine. Catalyzes the oxidative cleavage of the indole moiety. The chain is Tryptophan 2,3-dioxygenase from Sorangium cellulosum (strain So ce56) (Polyangium cellulosum (strain So ce56)).